Consider the following 470-residue polypeptide: MRFSTLHFAFLATLSSIFTVVAASDTTTCSSSKHCPEDKPCCSQFGICGTGAYCLGGCDIRYSYNLTACMPMPRMSTFQESFDSKDKVKEIELQSDYLGNSTEADWVYTGWVDYYDNSLLIQMPNHTTGTVVSSTKYLWYGKVGATLKTSHDGGVVTAFILFSDVQDEIDYEFVGYNLTNPQSNYYSQGILNYNNSRNSSVNNTFEYYHNYEMDWTEDKIEWYIDGEKVRTLNKNDTWNETSNRYDYPQTPSRIQFSLWPGGDSSNAKGTIEWAGGLINWDSEDIKKYGYYYAHIKEIYATAYDIPNDVKLDGNSTKESDYHAFLYNSTDGDASNIMLTTKKTWLGSDDATGFDPQNDDEDSSSNKAQETTITSVSGSSTITSVKTDSTKKTANVPAQNTAAAAQATAKSSTGTNTYDPSAGVGGFVQDSKSTDSGSSGSSSQGVANSLNESVISGIFASICLGILSFFM.

The N-terminal stretch at 1–23 (MRFSTLHFAFLATLSSIFTVVAA) is a signal peptide. Cysteines 58 and 69 form a disulfide. Asn65, Asn100, and Asn125 each carry an N-linked (GlcNAc...) asparagine glycan. The GH16 domain occupies 95–282 (SDYLGNSTEA…WAGGLINWDS (188 aa)). The active-site Nucleophile is the Glu168. Glu172 functions as the Proton donor in the catalytic mechanism. Glu172 is a binding site for chitin. Asn177, Asn194, Asn198, Asn202, Asn235, and Asn239 each carry an N-linked (GlcNAc...) asparagine glycan. Chitin-binding residues include Trp259 and Thr270. 2 N-linked (GlcNAc...) asparagine glycosylation sites follow: Asn314 and Asn327. The disordered stretch occupies residues 347–446 (SDDATGFDPQ…SSGSSSQGVA (100 aa)). Low complexity-rich tracts occupy residues 370-384 (TTIT…ITSV) and 392-408 (TANV…QATA). Positions 409 to 418 (KSSTGTNTYD) are enriched in polar residues. A compositionally biased stretch (low complexity) spans 433–446 (TDSGSSGSSSQGVA). Ser440 carries GPI-anchor amidated serine lipidation. Positions 441 to 470 (SSQGVANSLNESVISGIFASICLGILSFFM) are cleaved as a propeptide — removed in mature form. Asn450 is a glycosylation site (N-linked (GlcNAc...) asparagine).

It belongs to the glycosyl hydrolase 16 family. CRH1 subfamily. In terms of processing, the GPI-anchor is attached to the protein in the endoplasmic reticulum and serves to target the protein to the cell surface. There, the glucosamine-inositol phospholipid moiety is cleaved off and the GPI-modified mannoprotein is covalently attached via its lipidless GPI glycan remnant to the 1,6-beta-glucan of the outer cell wall layer.

The protein localises to the secreted. It localises to the cell wall. The protein resides in the membrane. The enzyme catalyses Random endo-hydrolysis of N-acetyl-beta-D-glucosaminide (1-&gt;4)-beta-linkages in chitin and chitodextrins.. Its function is as follows. Dual chitinase/transglycosylase that plays a role in cell wall architecture. Chitinase and transglycosylase activities are coupled. Required for the polysaccharide cross-linking at the septa and the cell wall. More specifically, transfers chitin to 1,6-beta-glucan in the cell wall. Plays an important role in fungal pathogenesis via its functions in cell wall assembly and regeneration, filamentation, and adherence to host cells. Acts as a cell surface antigen in acute candidemia patients. The protein is Crh-like protein UTR2 of Candida albicans (strain SC5314 / ATCC MYA-2876) (Yeast).